A 43-amino-acid polypeptide reads, in one-letter code: Protein PsbN (43 aa).

The helical transmembrane segment at 5–27 (TLIAIFISCSLVSFTGYALYTAF) threads the bilayer.

The protein belongs to the PsbN family.

The protein resides in the plastid. The protein localises to the chloroplast thylakoid membrane. Its function is as follows. May play a role in photosystem I and II biogenesis. The chain is Protein PsbN from Lopidium concinnum (Moss).